We begin with the raw amino-acid sequence, 572 residues long: Frizzled-7 (572 aa).

Residues 1-32 (MRGPGTAASHSPLGLCALVLALLGALPTDTRA) form the signal peptide. Topologically, residues 33–254 (QPYHGEKGIS…EEERRFARLW (222 aa)) are extracellular. Positions 44-163 (PDHGFCQPIS…HGAGEICVGQ (120 aa)) constitute an FZ domain. Cystine bridges form between Cys49-Cys110, Cys57-Cys103, Cys94-Cys131, Cys120-Cys160, and Cys124-Cys148. Asn63 is a glycosylation site (N-linked (GlcNAc...) asparagine). Asn164 carries N-linked (GlcNAc...) asparagine glycosylation. Residues 255-275 (VGVWSVLCCASTLFTVLTYLV) form a helical membrane-spanning segment. Topologically, residues 276-286 (DMRRFSYPERP) are cytoplasmic. The helical transmembrane segment at 287–307 (IIFLSGCYFMVAVAHVAGFLL) threads the bilayer. Residues 308–334 (EDRAVCVERFSDDGYRTVAQGTKKEGC) lie on the Extracellular side of the membrane. A helical membrane pass occupies residues 335–355 (TILFMVLYFFGMASSIWWVIL). Residues 356 to 377 (SLTWFLAAGMKWGHEAIEANSQ) are Cytoplasmic-facing. A helical membrane pass occupies residues 378 to 398 (YFHLAAWAVPAVKTITILAMG). Topologically, residues 399–421 (QVDGDLLSGVCYVGLSSVDALRG) are extracellular. Residues 422–442 (FVLAPLFVYLFIGTSFLLAGF) traverse the membrane as a helical segment. The Cytoplasmic segment spans residues 443-468 (VSLFRIRTIMKHDGTKTEKLEKLMVR). Residues 469-489 (IGVFSVLYTVPATIVLACYFY) form a helical membrane-spanning segment. The Extracellular segment spans residues 490 to 526 (EQAFREHWERTWLLQTCKSYAVPCPPGHFSPMSPDFT). A helical membrane pass occupies residues 527–547 (VFMIKYLMTMIVGITTGFWIW). Over 548-572 (SGKTLQSWRRFYHRLSHSSKGETAV) the chain is Cytoplasmic. The short motif at 550–555 (KTLQSW) is the Lys-Thr-X-X-X-Trp motif, mediates interaction with the PDZ domain of Dvl family members element. Residues 570–572 (TAV) carry the PDZ-binding motif.

Belongs to the G-protein coupled receptor Fz/Smo family. Interacts with MAGI3. Interacts with DVL1. Interacts with CCDC88C/DAPLE; the interaction displaces DVL1 from FZD7, leading to inhibition of canonical Wnt signaling and triggering of non-canonical Wnt responses. Interacts with MYOC. Binds to SDCBP; this interaction is increased by inositol trisphosphate (IP3). Interacts with glypican GPC3. Ubiquitinated by ZNRF3, leading to its degradation by the proteasome.

The protein localises to the cell membrane. The protein resides in the endosome membrane. Receptor for Wnt proteins. Most frizzled receptors are coupled to the beta-catenin canonical signaling pathway, which leads to the activation of disheveled proteins, inhibition of GSK-3 kinase, nuclear accumulation of beta-catenin and activation of Wnt target genes. A second signaling pathway involving PKC and calcium fluxes has been seen for some family members, but it is not yet clear if it represents a distinct pathway or if it can be integrated in the canonical pathway, as PKC seems to be required for Wnt-mediated inactivation of GSK-3 kinase. Both pathways seem to involve interactions with G-proteins. Activation by WNT8 induces expression of beta-catenin target genes. Following ligand activation, binds to CCDC88C/DAPLE which displaces DVL1 from FZD7 and leads to inhibition of canonical Wnt signaling, activation of G-proteins by CCDC88C and triggering of non-canonical Wnt responses. May be involved in transduction and intercellular transmission of polarity information during tissue morphogenesis and/or in differentiated tissues. This chain is Frizzled-7 (Fzd7), found in Mus musculus (Mouse).